The following is a 101-amino-acid chain: MIPGELFIQDGEIELNAGRKTVTLTVANTGDRPIQVGSHYHFFETNPALKFERKKARGMRLDIAAGTAVRFEPGQTRDVQLVALAGKKTIYGFRGDVMGKL.

Belongs to the urease beta subunit family. Heterotrimer of UreA (gamma), UreB (beta) and UreC (alpha) subunits. Three heterotrimers associate to form the active enzyme.

The protein resides in the cytoplasm. It catalyses the reaction urea + 2 H2O + H(+) = hydrogencarbonate + 2 NH4(+). Its pathway is nitrogen metabolism; urea degradation; CO(2) and NH(3) from urea (urease route): step 1/1. The sequence is that of Urease subunit beta from Bradyrhizobium diazoefficiens (strain JCM 10833 / BCRC 13528 / IAM 13628 / NBRC 14792 / USDA 110).